Reading from the N-terminus, the 477-residue chain is Argininosuccinate lyase (477 aa).

It belongs to the lyase 1 family. Argininosuccinate lyase subfamily.

It is found in the cytoplasm. The enzyme catalyses 2-(N(omega)-L-arginino)succinate = fumarate + L-arginine. The protein operates within amino-acid biosynthesis; L-arginine biosynthesis; L-arginine from L-ornithine and carbamoyl phosphate: step 3/3. The chain is Argininosuccinate lyase from Corynebacterium efficiens (strain DSM 44549 / YS-314 / AJ 12310 / JCM 11189 / NBRC 100395).